The primary structure comprises 800 residues: MLISNEWLKDYVNVDQSVQALAERITRTGIEVDDIIDYTKDIKKLVVGHVLSKTPHPNADKLNICQVDLGEEEPVQIVCGAPNVDEGQHVIVAKVGGRLPGGVKIKRAKLRGERSEGMICSLQEIGISSHVTPKNYESGIYVFPEAVKPGTDALEALYLNDQVMEFDLTPNRADALSMIGTAYEVAALYQTKMNKPQLTSNESQESAKDELTIEVKNEDKVPYYSARVVHDVTIGPSPVWMQFRLIKAGIRPINNVVDISNYVLLEYGQPLHMFDQEQIGSQSIEVRQAKKDETMRTLDGEERRLLDTDIVITNGKDPIALGGVMGGDFSEVTEQTRHVVVEGAIFDPVSIRHTSRRLNLRSESSSRFEKGIATEFVDEAVDRACYLLETYASATVLKDRISYGDLGSFVTPIKITADKVNRTIGFNLTDEEIIDIFEQLGFKTENKNGDIIVNVPSRRKDISIKEDLIEEVARIYGYDDIPSTLPVFKDVTSGELTDRQFKTRTVKETLEGAGLDQAITYSLVSKNHATDFALQNRSTIELLMPMSEAHSTLRQSLLPHLIDAVSYNVARKNTNVKLYEIGRVFFGNGEGELPDEVEYLSGILTGDFVNNKWQGKKEPVDFYLTKGIVERVAEKLNLQFDFRAGQIDGLHPGRTAIVSLNGKDIGFIGELHPTLAANNDLKRTYVFELNYDAMMEVSVGYINYEPIPRFPGVTRDIALEVNHEVTSSELLSIIHENGEDILNDTLVFDVYEGEHLEKGKKSIAIRLSYLDTENTLTDERVNAVHDKILEALKKHGAIIR.

The tRNA-binding domain maps to 39 to 154; the sequence is TKDIKKLVVG…EAVKPGTDAL (116 aa). The region spanning 408–483 is the B5 domain; that stretch reads SFVTPIKITA…RIYGYDDIPS (76 aa). Mg(2+) is bound by residues D461, D467, E470, and E471. One can recognise an FDX-ACB domain in the interval 708–800; it reads PRFPGVTRDI…ALKKHGAIIR (93 aa).

Belongs to the phenylalanyl-tRNA synthetase beta subunit family. Type 1 subfamily. In terms of assembly, tetramer of two alpha and two beta subunits. Mg(2+) is required as a cofactor.

It is found in the cytoplasm. The catalysed reaction is tRNA(Phe) + L-phenylalanine + ATP = L-phenylalanyl-tRNA(Phe) + AMP + diphosphate + H(+). This is Phenylalanine--tRNA ligase beta subunit from Staphylococcus epidermidis (strain ATCC 35984 / DSM 28319 / BCRC 17069 / CCUG 31568 / BM 3577 / RP62A).